A 435-amino-acid chain; its full sequence is Asparagine--tRNA ligase (435 aa).

The protein belongs to the class-II aminoacyl-tRNA synthetase family. As to quaternary structure, homodimer.

It localises to the cytoplasm. It carries out the reaction tRNA(Asn) + L-asparagine + ATP = L-asparaginyl-tRNA(Asn) + AMP + diphosphate + H(+). In Leptospira interrogans serogroup Icterohaemorrhagiae serovar copenhageni (strain Fiocruz L1-130), this protein is Asparagine--tRNA ligase.